The chain runs to 547 residues: Pyochelin synthase PchD (547 aa).

This sequence belongs to the ATP-dependent AMP-binding enzyme family.

It catalyses the reaction salicylate + holo-[ACP] + ATP = salicyl-[ACP] + AMP + diphosphate. Its pathway is siderophore biosynthesis. The protein operates within antifungal biosynthesis. Its function is as follows. Involved in the biosynthesis of the siderophore pyochelin. Specifically adenylates salicylate and loads it onto the holo form of PchE via a thioester linkage to the phosphopanthetheine moiety. Is also involved in the synthesis of the antifungal antibiotic dihydroaeruginoic acid (Dha or hydroxyphenyl-thiazolinyl-carboxylate), a precursor of pyochelin. This Pseudomonas aeruginosa (strain ATCC 15692 / DSM 22644 / CIP 104116 / JCM 14847 / LMG 12228 / 1C / PRS 101 / PAO1) protein is Pyochelin synthase PchD.